Here is a 666-residue protein sequence, read N- to C-terminus: MVLLLFLVLFFVPESVVCQRPNPNGVEFNTSGNMYTSGSAYINNNGLIRLTNSTPQTTGQVFYNDQLRFKNSVNGTVSSFSTTFVFSIEFHNGIYGGYGIAFVICPTRDLSPTFPTTYLGLFNRSNMGDPKNHIVAVELDTKVDQQFEDKDANHVGIDINTLVSDTVALAGYYMDNGTFRSLLLNSGQPMQIWIEYDSKQKQINVTLHPLYVPKPKIPLLSLEKDLSPYLLELMYVGFTSTTGDLTASHYILGWTFKMNGTTPDIDPSRLPKIPRYNQPWIQSPNGILTISLTVSGVIILIILSLSLWLFLKRKKLLEVLEDWEVQFGPHRFAFKDLHIATKGFKDTEVLGKGGFGKVYKGTLPVSNVEIAVKMVSHDSRQGMREFIAEIATIGRLRHPNLVRLQGYCRHKGELYLVYDCMAKGSLDKFLYHQQTGNLDWSQRFKIIKDVASGLYYLHQQWVQVIIHRDIKPANILLDANMNAKLGDFGLAKLCDHGTDPQTSHVAGTLGYISPELSRTGKASTRSDVFAFGIVMLEIACGRKPILPRASQREMVLTDWVLECWENEDIMQVLDHKIGQEYVEEQAALVLKLGLFCSHPVAAIRPNMSSVIQLLDSVAQLPHNLLDIVQTREVHRGTEISGEAADSPESCSIAPLTFTESFVSHGR.

The N-terminal stretch at 1-18 (MVLLLFLVLFFVPESVVC) is a signal peptide. The Extracellular portion of the chain corresponds to 19 to 289 (QRPNPNGVEF…WIQSPNGILT (271 aa)). The legume-lectin like stretch occupies residues 27-257 (EFNTSGNMYT…SHYILGWTFK (231 aa)). N-linked (GlcNAc...) asparagine glycans are attached at residues asparagine 29, asparagine 74, asparagine 123, asparagine 176, asparagine 204, and asparagine 259. Residues 290 to 310 (ISLTVSGVIILIILSLSLWLF) form a helical membrane-spanning segment. Residues 311–666 (LKRKKLLEVL…FTESFVSHGR (356 aa)) lie on the Cytoplasmic side of the membrane. Positions 344–625 (FKDTEVLGKG…SVAQLPHNLL (282 aa)) constitute a Protein kinase domain. ATP-binding positions include 350-358 (LGKGGFGKV) and lysine 373. Aspartate 469 acts as the Proton acceptor in catalysis.

This sequence in the C-terminal section; belongs to the protein kinase superfamily. Ser/Thr protein kinase family. It in the N-terminal section; belongs to the leguminous lectin family.

The protein localises to the cell membrane. The catalysed reaction is L-seryl-[protein] + ATP = O-phospho-L-seryl-[protein] + ADP + H(+). It carries out the reaction L-threonyl-[protein] + ATP = O-phospho-L-threonyl-[protein] + ADP + H(+). This is Putative L-type lectin-domain containing receptor kinase V.1 (LECRK51) from Arabidopsis thaliana (Mouse-ear cress).